The following is a 586-amino-acid chain: Potassium-transporting ATPase potassium-binding subunit (586 aa).

Helical transmembrane passes span 11–31, 67–87, 136–156, 179–199, 279–299, 306–326, 351–371, 381–401, 403–423, 442–462, 507–527, and 551–571; these read LFLVLLLAVVKPMGAFMAKVF, AVAVLLFNLALFVSLFAILML, GLAVHNFVSAATGIAVAIAVI, LYVLLPISLIGALILVSQGVI, VEIFLILLIPFALTSTFGVMV, WAILGVMLLMMAISFAVLQGV, FGLAGASLFTVATTGTSCGAV, LGGMIPLGLILLGEIAPGGVG, GLYTMLAFVVIAVFVAGLMIG, IITVLAAGVVVLILSGVAMIT, ILGSLAMLVGRFAPAVAVLAM, and FALWLMLVILIVGALTFFPAL.

The protein belongs to the KdpA family. The system is composed of three essential subunits: KdpA, KdpB and KdpC.

Its subcellular location is the cell inner membrane. Its function is as follows. Part of the high-affinity ATP-driven potassium transport (or Kdp) system, which catalyzes the hydrolysis of ATP coupled with the electrogenic transport of potassium into the cytoplasm. This subunit binds the periplasmic potassium ions and delivers the ions to the membrane domain of KdpB through an intramembrane tunnel. The chain is Potassium-transporting ATPase potassium-binding subunit from Geobacter metallireducens (strain ATCC 53774 / DSM 7210 / GS-15).